Consider the following 583-residue polypeptide: Eukaryotic translation initiation factor 3 subunit D (583 aa).

The tract at residues 116 to 150 is disordered; it reads GRAQRGAGQRGGRAGFQRVGAGRGQGDRFYDNRGG. Residues 140–149 show a composition bias toward basic and acidic residues; sequence QGDRFYDNRG. Positions 298-312 are RNA gate; the sequence is SLDLVTVNENAIDAP. The disordered stretch occupies residues 561–583; that stretch reads NTFEEDEEAAAEEEEQKAEEDEE. The span at 563–583 shows a compositional bias: acidic residues; that stretch reads FEEDEEAAAEEEEQKAEEDEE.

Belongs to the eIF-3 subunit D family. Component of the eukaryotic translation initiation factor 3 (eIF-3) complex.

The protein localises to the cytoplasm. Its function is as follows. mRNA cap-binding component of the eukaryotic translation initiation factor 3 (eIF-3) complex, which is involved in protein synthesis of a specialized repertoire of mRNAs and, together with other initiation factors, stimulates binding of mRNA and methionyl-tRNAi to the 40S ribosome. The eIF-3 complex specifically targets and initiates translation of a subset of mRNAs involved in cell proliferation. In the eIF-3 complex, eif3d specifically recognizes and binds the 7-methylguanosine cap of a subset of mRNAs. The chain is Eukaryotic translation initiation factor 3 subunit D from Aspergillus oryzae (strain ATCC 42149 / RIB 40) (Yellow koji mold).